A 309-amino-acid polypeptide reads, in one-letter code: MSHWFFIINPTAGHRNGLRVWKSIQKELIKRKVEHRSFLTEHPGHAEVLARQISTIQEYKLKRLIVIGGDGTMHEVVNGLKDVDDIELSFVPAGAYNDFSRGFSIKKIDLIQEIKKVKRPLTRTFHLGSVNFLQDKSQILYFMNHIGIGFDAYVNKKAMEFPLRRVFLFLRLRFLVYPLSHLHASATFKPFTLACTTEDETREFHDVWFAVVSNHPFYGGGMKAAPLANPREKTFDIVIVENQPFLKKYWLLCLMAFGKHTKMDGVTMFKAKDITFYTKDKIPFHADGEIMGTTPFRLASSPSPLRIKT.

The 134-residue stretch at 1-134 folds into the DAGKc domain; that stretch reads MSHWFFIINP…FHLGSVNFLQ (134 aa). ATP contacts are provided by residues 9-13, Thr40, and 69-75; these read NPTAG and GDGTMHE. 3 residues coordinate Mg(2+): Asn229, Glu232, and Thr234. The active-site Proton acceptor is the Glu289.

It belongs to the diacylglycerol/lipid kinase family. The cofactor is Mg(2+).

In terms of biological role, may catalyze the ATP-dependent phosphorylation of lipids other than diacylglycerol (DAG). In fact, is not able to exhibit diacylglycerol kinase activity in vitro. This chain is Putative lipid kinase YtlR (ytlR), found in Bacillus subtilis (strain 168).